A 365-amino-acid chain; its full sequence is Flagellar P-ring protein (365 aa).

Residues 1–19 (MIKFLSALILLLVTTAAQA) form the signal peptide.

It belongs to the FlgI family. The basal body constitutes a major portion of the flagellar organelle and consists of four rings (L,P,S, and M) mounted on a central rod.

It localises to the periplasm. The protein resides in the bacterial flagellum basal body. Its function is as follows. Assembles around the rod to form the L-ring and probably protects the motor/basal body from shearing forces during rotation. The chain is Flagellar P-ring protein (flgI) from Escherichia coli O157:H7.